The primary structure comprises 184 residues: MKIAQEIRAGNVIMHGKDPMIVLKTEYARGGRGAATVRMKLKALLNNMGTEVVFKADDKIDNVILDKKECTYSYFADPMYVCMDAEYNQYEVEAENMGDALNYLEDGMAVEVVFYDGKAISVELPTSVEREITWTEPAVKGDTSGKVLKPAKIATGFEVAVPLFVNQGDRIEIDTRTGEYRKRV.

Belongs to the elongation factor P family.

The protein resides in the cytoplasm. It participates in protein biosynthesis; polypeptide chain elongation. Functionally, involved in peptide bond synthesis. Stimulates efficient translation and peptide-bond synthesis on native or reconstituted 70S ribosomes in vitro. Probably functions indirectly by altering the affinity of the ribosome for aminoacyl-tRNA, thus increasing their reactivity as acceptors for peptidyl transferase. This chain is Elongation factor P, found in Paracidovorax citrulli (strain AAC00-1) (Acidovorax citrulli).